The sequence spans 126 residues: Holo-[acyl-carrier-protein] synthase (126 aa).

Residues Asp9 and Glu58 each coordinate Mg(2+).

Belongs to the P-Pant transferase superfamily. AcpS family. Requires Mg(2+) as cofactor.

It localises to the cytoplasm. The enzyme catalyses apo-[ACP] + CoA = holo-[ACP] + adenosine 3',5'-bisphosphate + H(+). Its function is as follows. Transfers the 4'-phosphopantetheine moiety from coenzyme A to a Ser of acyl-carrier-protein. The protein is Holo-[acyl-carrier-protein] synthase of Klebsiella pneumoniae (strain 342).